Here is a 705-residue protein sequence, read N- to C-terminus: Solute carrier family 12 member 8 (705 aa).

11 helical membrane passes run F38–F58, G69–L89, I92–V112, V121–A141, I159–I179, L181–F201, F232–M252, L268–V288, L306–G326, L368–I388, and F390–G410. The segment at E472 to S512 is disordered. Basic residues predominate over residues N486–A495. 2 helical membrane passes run W587 to Y607 and M612 to G632.

It belongs to the SLC12A transporter family.

The protein resides in the membrane. In terms of biological role, cation/chloride cotransporter that may play a role in the control of keratinocyte proliferation. The polypeptide is Solute carrier family 12 member 8 (Slc12a8) (Mus musculus (Mouse)).